We begin with the raw amino-acid sequence, 338 residues long: uncharacterized protein (338 aa).

The tract at residues 1–72 (MASPPILSRE…LNPVEDYDSK (72 aa)) is disordered. Over residues 24–38 (GGNSEVNIDPSASSS) the composition is skewed to polar residues. The segment covering 49 to 58 (ADTKIDPHLL) has biased composition (basic and acidic residues). Residues 59-68 (EEDDLNPVED) show a composition bias toward acidic residues.

Its subcellular location is the cytoplasm. The protein localises to the nucleus. This is an uncharacterized protein from Schizosaccharomyces pombe (strain 972 / ATCC 24843) (Fission yeast).